The primary structure comprises 416 residues: Cytochrome P450 monooxygenase PikC (416 aa).

Residues E94, 187–191 (AQTAM), and 238–246 (HILLVAGHE) contribute to the substrate site. Residue C354 coordinates heme.

The protein belongs to the cytochrome P450 family. Requires heme as cofactor.

The catalysed reaction is narbomycin + 2 reduced [2Fe-2S]-[ferredoxin] + O2 + 2 H(+) = pikromycin + 2 oxidized [2Fe-2S]-[ferredoxin] + H2O. The enzyme catalyses narbomycin + 2 reduced [2Fe-2S]-[ferredoxin] + O2 + 2 H(+) = neopikromycin + 2 oxidized [2Fe-2S]-[ferredoxin] + H2O. It catalyses the reaction narbomycin + 4 reduced [2Fe-2S]-[ferredoxin] + 2 O2 + 4 H(+) = novapikromycin + 4 oxidized [2Fe-2S]-[ferredoxin] + 2 H2O. It carries out the reaction 10-deoxymethymycin + 2 reduced [2Fe-2S]-[ferredoxin] + O2 + 2 H(+) = methymycin + 2 oxidized [2Fe-2S]-[ferredoxin] + H2O. The catalysed reaction is 10-deoxymethymycin + 2 reduced [2Fe-2S]-[ferredoxin] + O2 + 2 H(+) = neomethymycin + 2 oxidized [2Fe-2S]-[ferredoxin] + H2O. The enzyme catalyses 10-deoxymethymycin + 4 reduced [2Fe-2S]-[ferredoxin] + 2 O2 + 4 H(+) = novamethymycin + 4 oxidized [2Fe-2S]-[ferredoxin] + 2 H2O. It participates in antibiotic biosynthesis. In terms of biological role, catalyzes the hydroxylation of narbomycin to give rise to pikromycin, and of 10-deoxymethymycin (YC-17) to give rise to methymycin and neomethymycin during macrolide antibiotic biosynthesis. In addition, produces low amounts of neopicromycin, novapikromycin and novamethymycin. Requires the participation of a ferredoxin and a ferredoxin reductase for the transfer of electrons from NADPH to the monooxygenase. In Streptomyces venezuelae, this protein is Cytochrome P450 monooxygenase PikC.